The chain runs to 334 residues: 6-phosphogluconolactonase (334 aa).

It belongs to the cycloisomerase 2 family.

The enzyme catalyses 6-phospho-D-glucono-1,5-lactone + H2O = 6-phospho-D-gluconate + H(+). The protein operates within carbohydrate degradation; pentose phosphate pathway; D-ribulose 5-phosphate from D-glucose 6-phosphate (oxidative stage): step 2/3. In terms of biological role, catalyzes the hydrolysis of 6-phosphogluconolactone to 6-phosphogluconate. The protein is 6-phosphogluconolactonase of Buchnera aphidicola subsp. Acyrthosiphon pisum (strain APS) (Acyrthosiphon pisum symbiotic bacterium).